Reading from the N-terminus, the 644-residue chain is Threonine--tRNA ligase (644 aa).

Positions M1–T61 constitute a TGS domain. A catalytic region spans residues D242–P533. Zn(2+) is bound by residues C333, H384, and H510.

Belongs to the class-II aminoacyl-tRNA synthetase family. In terms of assembly, homodimer. Requires Zn(2+) as cofactor.

The protein localises to the cytoplasm. It catalyses the reaction tRNA(Thr) + L-threonine + ATP = L-threonyl-tRNA(Thr) + AMP + diphosphate + H(+). Catalyzes the attachment of threonine to tRNA(Thr) in a two-step reaction: L-threonine is first activated by ATP to form Thr-AMP and then transferred to the acceptor end of tRNA(Thr). Also edits incorrectly charged L-seryl-tRNA(Thr). The protein is Threonine--tRNA ligase of Psychrobacter arcticus (strain DSM 17307 / VKM B-2377 / 273-4).